We begin with the raw amino-acid sequence, 351 residues long: Biotin synthase (351 aa).

Positions 58-285 (NTVQLSTLLS…RAMVRLSAGR (228 aa)) constitute a Radical SAM core domain. Residues C73, C77, and C80 each coordinate [4Fe-4S] cluster. Residues C117, C148, C208, and R280 each coordinate [2Fe-2S] cluster.

This sequence belongs to the radical SAM superfamily. Biotin synthase family. In terms of assembly, homodimer. Requires [4Fe-4S] cluster as cofactor. [2Fe-2S] cluster serves as cofactor.

It carries out the reaction (4R,5S)-dethiobiotin + (sulfur carrier)-SH + 2 reduced [2Fe-2S]-[ferredoxin] + 2 S-adenosyl-L-methionine = (sulfur carrier)-H + biotin + 2 5'-deoxyadenosine + 2 L-methionine + 2 oxidized [2Fe-2S]-[ferredoxin]. It functions in the pathway cofactor biosynthesis; biotin biosynthesis; biotin from 7,8-diaminononanoate: step 2/2. Its function is as follows. Catalyzes the conversion of dethiobiotin (DTB) to biotin by the insertion of a sulfur atom into dethiobiotin via a radical-based mechanism. The protein is Biotin synthase of Paraburkholderia phymatum (strain DSM 17167 / CIP 108236 / LMG 21445 / STM815) (Burkholderia phymatum).